Reading from the N-terminus, the 357-residue chain is Scopoletin 8-hydroxylase (357 aa).

Residues 206 to 307 (MGTKMVNMNY…RVSVPIFTAP (102 aa)) enclose the Fe2OG dioxygenase domain. Tyr-216 serves as a coordination point for 2-oxoglutarate. Residues His-231, Asp-233, and His-288 each contribute to the Fe cation site. 2-oxoglutarate is bound by residues Arg-298 and Ser-300.

The protein belongs to the iron/ascorbate-dependent oxidoreductase family. L-ascorbate is required as a cofactor. Requires Fe(2+) as cofactor. Expressed in both primary and lateral roots under iron-deficient conditions, except in apical root zones, and mostly in the root epidermal layer.

It catalyses the reaction scopoletin + 2-oxoglutarate + O2 = fraxetin + succinate + CO2. It functions in the pathway phenylpropanoid metabolism. Involved in the pathway of sideretin biosynthesis from feruloyl CoA, a redox-active catecholic metabolite exuded by roots in response to iron deficiency in order to facilitate the uptake of iron; this pathway consists in the successive conversion from feruloyl CoA to scopoletin, from scopoletin to fraxetin and from fraxetin to sideretin. Catalyzes the biosynthesis of fraxetin via scopoletin hydroxylation. In Arabidopsis thaliana (Mouse-ear cress), this protein is Scopoletin 8-hydroxylase.